We begin with the raw amino-acid sequence, 350 residues long: 4-hydroxy-2-oxovalerate aldolase 3 (350 aa).

In terms of domain architecture, Pyruvate carboxyltransferase spans 13–265; it reads VVFHDMCLRD…DTGVDLFRLM (253 aa). Substrate is bound at residue 21 to 22; sequence RD. A Mn(2+)-binding site is contributed by D22. H25 acts as the Proton acceptor in catalysis. Residues S175 and H204 each contribute to the substrate site. Mn(2+)-binding residues include H204 and H206. Substrate is bound at residue Y295.

This sequence belongs to the 4-hydroxy-2-oxovalerate aldolase family.

The catalysed reaction is (S)-4-hydroxy-2-oxopentanoate = acetaldehyde + pyruvate. The protein is 4-hydroxy-2-oxovalerate aldolase 3 (lapG) of Azotobacter vinelandii (strain DJ / ATCC BAA-1303).